The following is a 268-amino-acid chain: Indole-3-glycerol phosphate synthase (268 aa).

This sequence belongs to the TrpC family.

It catalyses the reaction 1-(2-carboxyphenylamino)-1-deoxy-D-ribulose 5-phosphate + H(+) = (1S,2R)-1-C-(indol-3-yl)glycerol 3-phosphate + CO2 + H2O. The protein operates within amino-acid biosynthesis; L-tryptophan biosynthesis; L-tryptophan from chorismate: step 4/5. In Micrococcus luteus (strain ATCC 4698 / DSM 20030 / JCM 1464 / CCM 169 / CCUG 5858 / IAM 1056 / NBRC 3333 / NCIMB 9278 / NCTC 2665 / VKM Ac-2230) (Micrococcus lysodeikticus), this protein is Indole-3-glycerol phosphate synthase.